A 260-amino-acid chain; its full sequence is MATPPKRSCPSFSASSEGTRIKKISIEGNIAAGKSTFVNILKQLCEDWEVVPEPVARWCNVQSTQDEFEELTMSQKNGGNVLQMMYEKPERWSFTFQTYACLSRIRAQLASLNGKLKDAEKPVLFFERSVYSDRYIFASNLYESECMNETEWTIYQDWHDWMNNQFGQSLELDGIIYLQATPETCLHRIYLRGRNEEQGIPLEYLEKLHYKHESWLLHRTLKTNFDYLQEVPILTLDVNEDFKDKYESLVEKVKEFLSTL.

Ser-11 and Ser-15 each carry phosphoserine; by CK1. Residue 28–36 participates in ATP binding; the sequence is GNIAAGKST. A substrate-binding site is contributed by Glu-53. The residue at position 72 (Thr-72) is a Phosphothreonine; by CK1. Residue Ser-74 is modified to Phosphoserine. 2 residues coordinate substrate: Tyr-86 and Gln-97. The active-site Proton acceptor is Glu-127. The substrate site is built by Arg-128 and Asp-133. 188-192 lines the ATP pocket; that stretch reads RIYLR. Glu-197 is a substrate binding site. 240–242 is a binding site for ATP; it reads EDF.

Belongs to the DCK/DGK family. In terms of assembly, homodimer. Post-translationally, phosphorylated and activated in vitro upon phosphorylation at Ser-74 by CSNK1D/CK1.

The protein resides in the nucleus. It catalyses the reaction 2'-deoxycytidine + a ribonucleoside 5'-triphosphate = dCMP + a ribonucleoside 5'-diphosphate + H(+). It carries out the reaction 2'-deoxyadenosine + ATP = dAMP + ADP + H(+). The catalysed reaction is 2'-deoxyguanosine + ATP = dGMP + ADP + H(+). In terms of biological role, phosphorylates the deoxyribonucleosides deoxycytidine, deoxyguanosine and deoxyadenosine. Has broad substrate specificity, and does not display selectivity based on the chirality of the substrate. It is also an essential enzyme for the phosphorylation of numerous nucleoside analogs widely employed as antiviral and chemotherapeutic agents. The chain is Deoxycytidine kinase (DCK) from Homo sapiens (Human).